We begin with the raw amino-acid sequence, 824 residues long: Ras guanine nucleotide exchange factor I (824 aa).

Disordered regions lie at residues 1-51 and 65-167; these read MSNP…KPTK and GSNL…LILD. Residues 8 to 41 are compositionally biased toward low complexity; it reads SNSTNGSSNSLNGESVSPNRLGSSPGSPISKASS. Positions 83-95 are enriched in polar residues; it reads NSSVGLLNNSTGS. Residues 104–116 are compositionally biased toward low complexity; sequence SSPKSSYILSSSI. The span at 117–128 shows a compositional bias: gly residues; sequence GSGGSGGGGGSS. The span at 136–167 shows a compositional bias: low complexity; that stretch reads SASNNSSGPRSRSGSLGKNNSSQQNNNNLILD. The LisH domain occupies 223 to 255; that stretch reads GRDNILQLILQHLQFEGLMDSRKILEEEAKIQY. Disordered stretches follow at residues 330–354 and 398–425; these read YVDE…TTAT and NTQQ…STGT. The segment covering 331–341 has biased composition (basic and acidic residues); sequence VDEKDNDKPSK. A compositionally biased stretch (low complexity) spans 343 to 354; it reads SPTTATTTTTAT. Polar residues predominate over residues 413–425; sequence LKSTQSITGSTGT. The N-terminal Ras-GEF domain maps to 426–551; sequence LGPQVKAASL…VISDALNSGL (126 aa). Positions 585–816 constitute a Ras-GEF domain; sequence DEEEISRQLT…YTRSMSFEPR (232 aa).

In terms of biological role, promotes the exchange of Ras-bound GDP by GTP. This Dictyostelium discoideum (Social amoeba) protein is Ras guanine nucleotide exchange factor I (gefI).